The primary structure comprises 567 residues: Diacylglycerol kinase epsilon (567 aa).

Residues 22-42 (LILWTLCSVLLPVFITFWCSL) form a helical membrane-spanning segment. Phorbol-ester/DAG-type zinc fingers lie at residues 59 to 108 (KHGW…RFQC) and 124 to 177 (PHHW…NEKC). One can recognise a DAGKc domain in the interval 215–356 (KQWTPLIILA…LDRWKVQVTN (142 aa)).

This sequence belongs to the eukaryotic diacylglycerol kinase family. In terms of tissue distribution, expressed predominantly in testis. Expressed in endothelium, platelets and podocytes (at protein level).

It is found in the membrane. Its subcellular location is the cytoplasm. It catalyses the reaction a 1,2-diacyl-sn-glycerol + ATP = a 1,2-diacyl-sn-glycero-3-phosphate + ADP + H(+). The enzyme catalyses 1-hexadecanoyl-2-(5Z,8Z,11Z,14Z-eicosatetraenoyl)-sn-glycerol + ATP = 1-hexadecanoyl-2-(5Z,8Z,11Z,14Z-eicosatetraenoyl)-sn-glycero-3-phosphate + ADP + H(+). The catalysed reaction is 1-octadecanoyl-2-(5Z,8Z,11Z,14Z-eicosatetraenoyl)-sn-glycerol + ATP = 1-octadecanoyl-2-(5Z,8Z,11Z,14Z-eicosatetraenoyl)-sn-glycero-3-phosphate + ADP + H(+). It carries out the reaction 1-eicosanoyl-2-(5Z,8Z,11Z,14Z)-eicosatetraenoyl-sn-glycerol + ATP = 1-eicosanoyl-2-(5Z,8Z,11Z,14Z)-eicosatetraenoyl-sn-glycero-3-phosphate + ADP + H(+). It catalyses the reaction 1,2-di-(5Z,8Z,11Z,14Z)-eicosatetraenoyl-sn-glycerol + ATP = 1,2-di-(5Z,8Z,11Z,14Z)-eicosatetraenoyl-sn-glycero-3-phosphate + ADP + H(+). The enzyme catalyses 1-octadecanoyl-2-(9Z,12Z)-octadecadienoyl-sn-glycerol + ATP = 1-octadecanoyl-2-(9Z,12Z-octadecadienoyl)-sn-glycero-3-phosphate + ADP + H(+). The catalysed reaction is 1,2-di-(9Z,12Z-octadecadienoyl)-sn-glycerol + ATP = 1,2-di-(9Z,12Z-octadecadienoyl)-sn-glycero-3-phosphate + ADP + H(+). It carries out the reaction 1,2-di-(9Z-octadecenoyl)-sn-glycerol + ATP = 1,2-di-(9Z-octadecenoyl)-sn-glycero-3-phosphate + ADP + H(+). It participates in lipid metabolism; glycerolipid metabolism. With respect to regulation, undergoes competitive inhibition by its own product 1,2-diacyl-sn-glycero-3-phosphate/phosphatidic acid. The strongest inhibition being observed in vitro with 1-octadecanoyl-2-(5Z,8Z,11Z,14Z-eicosatetraenoyl)-sn-glycero-3-phosphate, a major intermediate in the phosphatidylinositol turnover cycle and more generally by diacylglycerols with an arachidonoyl acyl chain at the sn-2 position. Membrane-bound diacylglycerol kinase that converts diacylglycerol/DAG into phosphatidic acid/phosphatidate/PA and regulates the respective levels of these two bioactive lipids. Thereby, acts as a central switch between the signaling pathways activated by these second messengers with different cellular targets and opposite effects in numerous biological processes. Also plays an important role in the biosynthesis of complex lipids. Displays specificity for diacylglycerol substrates with an arachidonoyl acyl chain at the sn-2 position, with the highest activity toward 1-octadecanoyl-2-(5Z,8Z,11Z,14Z-eicosatetraenoyl)-sn-glycerol the main diacylglycerol intermediate within the phosphatidylinositol turnover cycle. Can also phosphorylate diacylglycerol substrates with a linoleoyl acyl chain at the sn-2 position but much less efficiently. The chain is Diacylglycerol kinase epsilon (DGKE) from Homo sapiens (Human).